Here is a 378-residue protein sequence, read N- to C-terminus: MFVNIRRDLHQIPELGFQEFKTQQYILDYLATLPSERLQIKTWRTGILVRVHGTAPTKTIGYRADMDGLPIDEQTDVPFRSTHEGRMHACGHDMHMAIALGVLTHVVHHPIRDDMLFIFQPAEEGPGGALPMLESDEMKQWMPDMILALHIAPAYPVGTIATKEGLLFANTSELFIDLIGKGGHAAFPHETKDMVVAASSLIMQLQTIVSRNVNPLDSAVITIGKLTSGTVQNVIAERARLEGTIRTLSPEAMEKVKGRIEAIVRGIEVAYDCQAHIDYGSMYYQVYNDETLTNEFMQFVEKETDVHLVRCQEAMTGEDFGYMLARIPGFMFWLGVQSPFGLHHAKLNPNEEAIDVAIQLLTRYVTWKGNHKVKEEER.

The active site involves Asp-65. Residue Glu-124 is the Proton acceptor of the active site.

The protein belongs to the peptidase M20A family. N-acetyldiaminopimelate deacetylase subfamily.

It carries out the reaction N-acetyl-(2S,6S)-2,6-diaminopimelate + H2O = (2S,6S)-2,6-diaminopimelate + acetate. It participates in amino-acid biosynthesis; L-lysine biosynthesis via DAP pathway; LL-2,6-diaminopimelate from (S)-tetrahydrodipicolinate (acetylase route): step 3/3. Functionally, catalyzes the conversion of N-acetyl-diaminopimelate to diaminopimelate and acetate. The chain is N-acetyldiaminopimelate deacetylase from Anoxybacillus flavithermus (strain DSM 21510 / WK1).